Consider the following 242-residue polypeptide: Protein HTATIP2 (242 aa).

Ala2 carries the post-translational modification N-acetylalanine. The tract at residues 2–25 is required for interaction with elongation factor EEF1A1; sequence ADKEALPKLREDFKMQNKSVFILG. Ser27, Gly28, Glu29, Thr30, Arg52, Arg53, Leu92, Gly93, Tyr143, Lys147, Leu170, and Arg178 together coordinate NADPH. Residue Tyr143 is the Proton acceptor of the active site. The active site involves Lys147.

In terms of assembly, monomer. Forms homodimers during oxidative stress. Interacts (via N-terminus) with elongation factor EEF1A1 (via middle-region); the interaction is direct and competes with EEF1A1 binding to guanyl-nucleotide exchange factor EEF1B2, thereby inhibiting GDP for GTP exchange and reactivation of EEF1A1. Interacts with nuclear transport receptors XPO4, IPO5/RANBP5, IPO7, IPO9 and KPNB1 as well as GCN1L1/GCN1 and LRPPRC probably through their HEAT repeats. Binds NCOA5/CIA.

It is found in the cytoplasm. Represses translation by preventing reactivation of elongation factor eEF1A. May also inhibit nuclear import by competing with nuclear import substrates for binding to a subset of nuclear transport receptors. Has additionally been proposed to act as a redox sensor involved in cellular oxidative stress surveillance. The polypeptide is Protein HTATIP2 (Mus musculus (Mouse)).